Consider the following 491-residue polypeptide: Aspartyl/glutamyl-tRNA(Asn/Gln) amidotransferase subunit B (491 aa).

It belongs to the GatB/GatE family. GatB subfamily. Heterotrimer of A, B and C subunits.

The enzyme catalyses L-glutamyl-tRNA(Gln) + L-glutamine + ATP + H2O = L-glutaminyl-tRNA(Gln) + L-glutamate + ADP + phosphate + H(+). It carries out the reaction L-aspartyl-tRNA(Asn) + L-glutamine + ATP + H2O = L-asparaginyl-tRNA(Asn) + L-glutamate + ADP + phosphate + 2 H(+). Functionally, allows the formation of correctly charged Asn-tRNA(Asn) or Gln-tRNA(Gln) through the transamidation of misacylated Asp-tRNA(Asn) or Glu-tRNA(Gln) in organisms which lack either or both of asparaginyl-tRNA or glutaminyl-tRNA synthetases. The reaction takes place in the presence of glutamine and ATP through an activated phospho-Asp-tRNA(Asn) or phospho-Glu-tRNA(Gln). In Burkholderia cenocepacia (strain ATCC BAA-245 / DSM 16553 / LMG 16656 / NCTC 13227 / J2315 / CF5610) (Burkholderia cepacia (strain J2315)), this protein is Aspartyl/glutamyl-tRNA(Asn/Gln) amidotransferase subunit B.